The primary structure comprises 147 residues: MRDNTIGSLIWLRLIRFTNQSNQMSNEFLKRFDLTTAQFDVLLQIRTYQPLTQMELAEKVTVTQGGISRMLTRLEKEGYIVRKQDWKTKTISLTEQGEAALERALPEQLAFQSSFFDDVLNEEEQKMLYELMTKVHKHSEKKELPQE.

The HTH marR-type domain maps to 1–137 (MRDNTIGSLI…LYELMTKVHK (137 aa)). The segment at residues 53–76 (QMELAEKVTVTQGGISRMLTRLEK) is a DNA-binding region (H-T-H motif).

This is an uncharacterized protein from Bacillus cereus (strain ATCC 10987 / NRS 248).